The sequence spans 47 residues: Defensin-like protein 1 (47 aa).

Disulfide bonds link Cys3/Cys47, Cys14/Cys34, Cys20/Cys41, and Cys24/Cys43.

As to quaternary structure, monomer and homodimer.

Its function is as follows. Inhibits trypsin but not chymotrypsin. In Vigna unguiculata (Cowpea), this protein is Defensin-like protein 1.